Reading from the N-terminus, the 2397-residue chain is Cell wall alpha-1,3-glucan synthase mok11 (2397 aa).

The segment at 1683-1705 is disordered; sequence SNQQSFDFKSSESDSFPQKSPSV. Residues 1687–1698 show a composition bias toward low complexity; sequence SFDFKSSESDSF.

This sequence belongs to the glycosyltransferase group 1 family.

It catalyses the reaction [(1-&gt;3)-alpha-D-glucosyl](n) + UDP-alpha-D-glucose = [(1-&gt;3)-alpha-D-glucosyl](n+1) + UDP + H(+). In Schizosaccharomyces pombe (strain 972 / ATCC 24843) (Fission yeast), this protein is Cell wall alpha-1,3-glucan synthase mok11 (mok11).